Here is a 181-residue protein sequence, read N- to C-terminus: Oligoribonuclease (181 aa).

Residues 8–171 (LVWIDMEMTG…DDIRESIAEL (164 aa)) form the Exonuclease domain. Tyrosine 129 is a catalytic residue.

It belongs to the oligoribonuclease family.

Its subcellular location is the cytoplasm. In terms of biological role, 3'-to-5' exoribonuclease specific for small oligoribonucleotides. In Aeromonas hydrophila subsp. hydrophila (strain ATCC 7966 / DSM 30187 / BCRC 13018 / CCUG 14551 / JCM 1027 / KCTC 2358 / NCIMB 9240 / NCTC 8049), this protein is Oligoribonuclease.